The sequence spans 386 residues: DNA replication and repair protein RecF (386 aa).

ATP is bound at residue 30–37 (GSNGFGKT).

The protein belongs to the RecF family.

It localises to the cytoplasm. Functionally, the RecF protein is involved in DNA metabolism; it is required for DNA replication and normal SOS inducibility. RecF binds preferentially to single-stranded, linear DNA. It also seems to bind ATP. This chain is DNA replication and repair protein RecF, found in Mycolicibacterium vanbaalenii (strain DSM 7251 / JCM 13017 / BCRC 16820 / KCTC 9966 / NRRL B-24157 / PYR-1) (Mycobacterium vanbaalenii).